The chain runs to 87 residues: Candoxin (87 aa).

The first 21 residues, 1 to 21 (MKTLLLTLVVVTIVCLDLGYT), serve as a signal peptide directing secretion. 5 cysteine pairs are disulfide-bonded: C24–C47, C27–C32, C40–C64, C68–C80, and C81–C86.

In terms of tissue distribution, expressed by the venom gland.

The protein resides in the secreted. Binds and inhibits muscular and neuronal nicotinic acetylcholine receptors (nAChR). Is a reversible antagonist of muscle nAChR (alpha-1-beta-1-delta-epsilon/CHRNA1-CHRNB1-CHRND-CHRNE) (IC(50)=10 nM) and a potent and poorly reversible antagonist of the neuronal alpha-7/CHRNA7 nAChR (IC(50)=50 nM). May exhibit differential affinities for the two binding sites on the muscle nAChR. The protein is Candoxin of Bungarus candidus (Malayan krait).